Reading from the N-terminus, the 278-residue chain is Rhomboid protease GlpG (278 aa).

Transmembrane regions (helical) follow at residues 94–114 (AGPL…LMLI), 143–163 (AFLH…WYLG), 175–195 (LLVL…LFSG), 196–216 (ANFG…WLTG), 224–241 (ISLP…LIAG), and 245–267 (ILGL…LMAF). S202 functions as the Nucleophile in the catalytic mechanism. Residue H255 is part of the active site.

This sequence belongs to the peptidase S54 family.

It is found in the cell inner membrane. The catalysed reaction is Cleaves type-1 transmembrane domains using a catalytic dyad composed of serine and histidine that are contributed by different transmembrane domains.. Its function is as follows. Rhomboid-type serine protease that catalyzes intramembrane proteolysis. This Yersinia pestis bv. Antiqua (strain Antiqua) protein is Rhomboid protease GlpG.